A 212-amino-acid chain; its full sequence is ER lumen protein-retaining receptor 1 (212 aa).

At 1–4 (MNIF) the chain is on the lumenal side. The chain crosses the membrane as a helical span at residues 5-24 (RFLGDISHLSAILILLLKIW). Topologically, residues 25–32 (KSRSCAGI) are cytoplasmic. Residues 33–52 (SGKSQLLFAIVFTTRYLDLF) form a helical membrane-spanning segment. The interval 47-48 (RY) is interaction with the K-D-E-L motif on target proteins. Topologically, residues 53 to 58 (TNFISL) are lumenal. The chain crosses the membrane as a helical span at residues 59–79 (YNTSMKMVYVASSYATIWMIY). The Cytoplasmic portion of the chain corresponds to 80-92 (SKFKATYDGNHDT). Residues 93 to 110 (FRVEFLIVPTAILAFLVN) form a helical membrane-spanning segment. The Lumenal portion of the chain corresponds to 111–116 (HDFTPL). Residues 117–135 (EILWTFSIYLESVAILPQL) form a helical membrane-spanning segment. Residues 136–149 (FMVSKTGEAETITS) lie on the Cytoplasmic side of the membrane. The chain crosses the membrane as a helical span at residues 150 to 168 (HYLFALGIYRALYLFNWIW). Residues 159-169 (RALYLFNWIWR) are interaction with the K-D-E-L motif on target proteins. Over 169–178 (RYQFEGFFDL) the chain is Lumenal. The chain crosses the membrane as a helical span at residues 179–199 (IAIVAGLVQTVLYCDFFYLYI). The Cytoplasmic portion of the chain corresponds to 200 to 212 (TKVLKGKKLSLPA). The segment at 204 to 207 (KGKK) is important for recycling of cargo proteins with the sequence motif K-D-E-L from the Golgi to the endoplasmic reticulum.

This sequence belongs to the ERD2 family.

Its subcellular location is the golgi apparatus membrane. It localises to the cytoplasmic vesicle. The protein resides in the COPI-coated vesicle membrane. It is found in the endoplasmic reticulum membrane. The protein localises to the endoplasmic reticulum-Golgi intermediate compartment membrane. Functionally, receptor for the C-terminal sequence motif K-D-E-L that is present on endoplasmic reticulum resident proteins and that mediates their recycling from the Golgi back to the endoplasmic reticulum. The protein is ER lumen protein-retaining receptor 1 (kdelr1) of Xenopus tropicalis (Western clawed frog).